Here is a 122-residue protein sequence, read N- to C-terminus: Large ribosomal subunit protein uL14 (122 aa).

This sequence belongs to the universal ribosomal protein uL14 family. In terms of assembly, part of the 50S ribosomal subunit. Forms a cluster with proteins L3 and L19. In the 70S ribosome, L14 and L19 interact and together make contacts with the 16S rRNA in bridges B5 and B8.

Its function is as follows. Binds to 23S rRNA. Forms part of two intersubunit bridges in the 70S ribosome. In Bacillus pumilus (strain SAFR-032), this protein is Large ribosomal subunit protein uL14.